A 282-amino-acid polypeptide reads, in one-letter code: Pantothenate synthetase (282 aa).

ATP is bound at residue 30–37; the sequence is MGNLHEGH. The active-site Proton donor is the His37. Residue Gln61 participates in (R)-pantoate binding. A beta-alanine-binding site is contributed by Gln61. 149-152 is an ATP binding site; sequence GEKD. Residue Gln155 participates in (R)-pantoate binding. Residues Val178 and 186–189 contribute to the ATP site; that span reads KSSR.

This sequence belongs to the pantothenate synthetase family. As to quaternary structure, homodimer.

The protein localises to the cytoplasm. The enzyme catalyses (R)-pantoate + beta-alanine + ATP = (R)-pantothenate + AMP + diphosphate + H(+). Its pathway is cofactor biosynthesis; (R)-pantothenate biosynthesis; (R)-pantothenate from (R)-pantoate and beta-alanine: step 1/1. Catalyzes the condensation of pantoate with beta-alanine in an ATP-dependent reaction via a pantoyl-adenylate intermediate. This chain is Pantothenate synthetase, found in Marinobacter nauticus (strain ATCC 700491 / DSM 11845 / VT8) (Marinobacter aquaeolei).